The sequence spans 363 residues: tRNA N6-adenosine threonylcarbamoyltransferase (363 aa).

2 residues coordinate Fe cation: His-121 and His-125. Substrate contacts are provided by residues 143 to 147, Asp-176, Gly-189, and Asn-287; that span reads LASGG. Asp-315 contributes to the Fe cation binding site.

It belongs to the KAE1 / TsaD family. It depends on Fe(2+) as a cofactor.

Its subcellular location is the cytoplasm. The catalysed reaction is L-threonylcarbamoyladenylate + adenosine(37) in tRNA = N(6)-L-threonylcarbamoyladenosine(37) in tRNA + AMP + H(+). Functionally, required for the formation of a threonylcarbamoyl group on adenosine at position 37 (t(6)A37) in tRNAs that read codons beginning with adenine. Is involved in the transfer of the threonylcarbamoyl moiety of threonylcarbamoyl-AMP (TC-AMP) to the N6 group of A37, together with TsaE and TsaB. TsaD likely plays a direct catalytic role in this reaction. This is tRNA N6-adenosine threonylcarbamoyltransferase from Rhodopseudomonas palustris (strain HaA2).